The sequence spans 147 residues: Transcriptional regulator MraZ (147 aa).

SpoVT-AbrB domains are found at residues 5-51 and 80-123; these read GTPV…PQPV and ACDV…DSEK.

It belongs to the MraZ family. Forms oligomers.

The protein resides in the cytoplasm. It localises to the nucleoid. This Nitrosospira multiformis (strain ATCC 25196 / NCIMB 11849 / C 71) protein is Transcriptional regulator MraZ.